The chain runs to 168 residues: S-ribosylhomocysteine lyase (168 aa).

Fe cation contacts are provided by H54, H58, and C128.

It belongs to the LuxS family. In terms of assembly, homodimer. It depends on Fe cation as a cofactor.

The catalysed reaction is S-(5-deoxy-D-ribos-5-yl)-L-homocysteine = (S)-4,5-dihydroxypentane-2,3-dione + L-homocysteine. Its function is as follows. Involved in the synthesis of autoinducer 2 (AI-2) which is secreted by bacteria and is used to communicate both the cell density and the metabolic potential of the environment. The regulation of gene expression in response to changes in cell density is called quorum sensing. Catalyzes the transformation of S-ribosylhomocysteine (RHC) to homocysteine (HC) and 4,5-dihydroxy-2,3-pentadione (DPD). The protein is S-ribosylhomocysteine lyase of Neisseria meningitidis serogroup A / serotype 4A (strain DSM 15465 / Z2491).